A 444-amino-acid polypeptide reads, in one-letter code: Signal recognition particle 54 kDa protein (444 aa).

GTP contacts are provided by residues 106–113 (GLQGSGKT), 187–191 (DTAGR), and 245–248 (SKLD).

This sequence belongs to the GTP-binding SRP family. SRP54 subfamily. Part of the signal recognition particle protein translocation system, which is composed of SRP and FtsY. Archaeal SRP consists of a 7S RNA molecule of 300 nucleotides and two protein subunits: SRP54 and SRP19.

Its subcellular location is the cytoplasm. The enzyme catalyses GTP + H2O = GDP + phosphate + H(+). In terms of biological role, involved in targeting and insertion of nascent membrane proteins into the cytoplasmic membrane. Binds to the hydrophobic signal sequence of the ribosome-nascent chain (RNC) as it emerges from the ribosomes. The SRP-RNC complex is then targeted to the cytoplasmic membrane where it interacts with the SRP receptor FtsY. The polypeptide is Signal recognition particle 54 kDa protein (Methanosphaera stadtmanae (strain ATCC 43021 / DSM 3091 / JCM 11832 / MCB-3)).